A 493-amino-acid chain; its full sequence is Glutamyl-tRNA(Gln) amidotransferase subunit A (493 aa).

Active-site charge relay system residues include K78 and S158. S182 (acyl-ester intermediate) is an active-site residue.

Belongs to the amidase family. GatA subfamily. As to quaternary structure, heterotrimer of A, B and C subunits.

The enzyme catalyses L-glutamyl-tRNA(Gln) + L-glutamine + ATP + H2O = L-glutaminyl-tRNA(Gln) + L-glutamate + ADP + phosphate + H(+). Allows the formation of correctly charged Gln-tRNA(Gln) through the transamidation of misacylated Glu-tRNA(Gln) in organisms which lack glutaminyl-tRNA synthetase. The reaction takes place in the presence of glutamine and ATP through an activated gamma-phospho-Glu-tRNA(Gln). In Methylorubrum extorquens (strain PA1) (Methylobacterium extorquens), this protein is Glutamyl-tRNA(Gln) amidotransferase subunit A.